A 185-amino-acid polypeptide reads, in one-letter code: Ribosome-recycling factor (185 aa).

This sequence belongs to the RRF family.

The protein resides in the cytoplasm. Its function is as follows. Responsible for the release of ribosomes from messenger RNA at the termination of protein biosynthesis. May increase the efficiency of translation by recycling ribosomes from one round of translation to another. This chain is Ribosome-recycling factor, found in Shewanella woodyi (strain ATCC 51908 / MS32).